We begin with the raw amino-acid sequence, 361 residues long: Chorismate synthase (361 aa).

Positions 48 and 54 each coordinate NADP(+). Residues 125–127 (RSS), 240–241 (NA), Gly-286, 301–305 (KPTSS), and Arg-327 contribute to the FMN site.

Belongs to the chorismate synthase family. In terms of assembly, homotetramer. Requires FMNH2 as cofactor.

It carries out the reaction 5-O-(1-carboxyvinyl)-3-phosphoshikimate = chorismate + phosphate. It participates in metabolic intermediate biosynthesis; chorismate biosynthesis; chorismate from D-erythrose 4-phosphate and phosphoenolpyruvate: step 7/7. Catalyzes the anti-1,4-elimination of the C-3 phosphate and the C-6 proR hydrogen from 5-enolpyruvylshikimate-3-phosphate (EPSP) to yield chorismate, which is the branch point compound that serves as the starting substrate for the three terminal pathways of aromatic amino acid biosynthesis. This reaction introduces a second double bond into the aromatic ring system. The chain is Chorismate synthase from Magnetococcus marinus (strain ATCC BAA-1437 / JCM 17883 / MC-1).